A 318-amino-acid chain; its full sequence is Acetyl-coenzyme A carboxylase carboxyl transferase subunit alpha (318 aa).

One can recognise a CoA carboxyltransferase C-terminal domain in the interval 31–292; that stretch reads DLTNEIEKLE…NKTITKSLHA (262 aa).

Belongs to the AccA family. Acetyl-CoA carboxylase is a heterohexamer composed of biotin carboxyl carrier protein (AccB), biotin carboxylase (AccC) and two subunits each of ACCase subunit alpha (AccA) and ACCase subunit beta (AccD).

It is found in the cytoplasm. The catalysed reaction is N(6)-carboxybiotinyl-L-lysyl-[protein] + acetyl-CoA = N(6)-biotinyl-L-lysyl-[protein] + malonyl-CoA. The protein operates within lipid metabolism; malonyl-CoA biosynthesis; malonyl-CoA from acetyl-CoA: step 1/1. Its function is as follows. Component of the acetyl coenzyme A carboxylase (ACC) complex. First, biotin carboxylase catalyzes the carboxylation of biotin on its carrier protein (BCCP) and then the CO(2) group is transferred by the carboxyltransferase to acetyl-CoA to form malonyl-CoA. This chain is Acetyl-coenzyme A carboxylase carboxyl transferase subunit alpha, found in Listeria monocytogenes serotype 4a (strain HCC23).